Here is an 860-residue protein sequence, read N- to C-terminus: DNA gyrase subunit A (860 aa).

The Topo IIA-type catalytic domain maps to 34–503 (LPDARDGLKP…EDGELIDTDL (470 aa)). The active-site O-(5'-phospho-DNA)-tyrosine intermediate is Y122. Residues 530–536 (QNRATRG) carry the GyrA-box motif.

The protein belongs to the type II topoisomerase GyrA/ParC subunit family. Heterotetramer, composed of two GyrA and two GyrB chains. In the heterotetramer, GyrA contains the active site tyrosine that forms a transient covalent intermediate with DNA, while GyrB binds cofactors and catalyzes ATP hydrolysis.

Its subcellular location is the cytoplasm. The enzyme catalyses ATP-dependent breakage, passage and rejoining of double-stranded DNA.. Its function is as follows. A type II topoisomerase that negatively supercoils closed circular double-stranded (ds) DNA in an ATP-dependent manner to modulate DNA topology and maintain chromosomes in an underwound state. Negative supercoiling favors strand separation, and DNA replication, transcription, recombination and repair, all of which involve strand separation. Also able to catalyze the interconversion of other topological isomers of dsDNA rings, including catenanes and knotted rings. Type II topoisomerases break and join 2 DNA strands simultaneously in an ATP-dependent manner. The sequence is that of DNA gyrase subunit A from Synechocystis sp. (strain ATCC 27184 / PCC 6803 / Kazusa).